The following is a 365-amino-acid chain: HLA class I histocompatibility antigen, A alpha chain (365 aa).

An N-terminal signal peptide occupies residues 1–24 (MAVMAPRTLLLLLSGALALTQTWA). Positions 3 to 11 (VMAPRTLLL) are VL9 epitope. The interval 25 to 114 (GSHSMRYFFT…LRGYYNQSEA (90 aa)) is alpha-1. Topologically, residues 25-308 (GSHSMRYFFT…ELSSQPTIPI (284 aa)) are extracellular. Tyrosine 31 lines the a peptide antigen pocket. Tyrosine 83 bears the Sulfotyrosine mark. Threonine 97 and tyrosine 108 together coordinate a peptide antigen. N-linked (GlcNAc...) asparagine glycosylation occurs at asparagine 110. An alpha-2 region spans residues 115 to 206 (GSHTIQIMYG…ENGKETLQRT (92 aa)). Cysteines 125 and 188 form a disulfide. Positions 140, 167, 170, 183, and 195 each coordinate a peptide antigen. The segment at 207–298 (DPPKTHMTHH…GLPKPLTLRW (92 aa)) is alpha-3. One can recognise an Ig-like C1-type domain in the interval 209 to 295 (PKTHMTHHPI…QHEGLPKPLT (87 aa)). A disulfide bridge connects residues cysteine 227 and cysteine 283. The tract at residues 299–308 (ELSSQPTIPI) is connecting peptide. The helical transmembrane segment at 309-332 (VGIIAGLVLLGAVITGAVVAAVMW) threads the bilayer. The Cytoplasmic segment spans residues 333–365 (RRKSSDRKGGSYTQAASSDSAQGSDVSLTACKV). The tract at residues 339–365 (RKGGSYTQAASSDSAQGSDVSLTACKV) is disordered. Serine 343 is subject to Phosphoserine. A Phosphotyrosine modification is found at tyrosine 344. Positions 346–359 (QAASSDSAQGSDVS) are enriched in low complexity. Phosphoserine occurs at positions 349, 350, 352, 356, and 359.

It belongs to the MHC class I family. As to quaternary structure, heterotrimer that consists of an alpha chain HLA-A, a beta chain B2M and a peptide (peptide-HLA-A-B2M). Early in biogenesis, HLA-A-B2M dimer interacts with the components of the peptide-loading complex composed of TAPBP, TAP1-TAP2, TAPBPL, PDIA3/ERP57 and CALR. Interacts with TAP1-TAP2 transporter via TAPBP; this interaction is obligatory for the loading of peptide epitopes delivered to the ER by TAP1-TAP2 transporter. Interacts with TAPBPL; TAPBPL binds peptide-free HLA-A-B2M complexes or those loaded with low affinity peptides, likely facilitating peptide exchange for higher affinity peptides. Only optimally assembled peptide-HLA-B2M trimer translocates to the surface of antigen-presenting cells, where it interacts with TCR and CD8 coreceptor on the surface of T cells. HLA-A (via polymorphic alpha-1 and alpha-2 domains) interacts with antigen-specific TCR (via CDR3 domains). One HLA-A molecule (mainly via nonpolymorphic alpha-3 domain) interacts with one CD8A homodimer (via CDR-like loop); this interaction ensures peptide-HLA-A-B2M recognition by CD8-positive T cells only. Alleles A*23:01; A*24:02 and A*32:01 interact (via Bw4 motif) with KIR3DL1 on NK cells; this interaction is direct. (Microbial infection) Interacts with HHV-8 MIR1 protein. In terms of assembly, (Microbial infection) Interacts with HTLV-1 accessory protein p12I. Post-translationally, (Microbial infection) Polyubiquitinated in a post ER compartment by interaction with human herpesvirus 8 MIR1 protein. This targets the protein for rapid degradation via the ubiquitin system. In terms of processing, N-linked glycosylation at Asn-110. Ubiquitous.

The protein localises to the cell membrane. The protein resides in the endoplasmic reticulum membrane. Functionally, antigen-presenting major histocompatibility complex class I (MHCI) molecule. In complex with B2M/beta 2 microglobulin displays primarily viral and tumor-derived peptides on antigen-presenting cells for recognition by alpha-beta T cell receptor (TCR) on HLA-A-restricted CD8-positive T cells, guiding antigen-specific T cell immune response to eliminate infected or transformed cells. May also present self-peptides derived from the signal sequence of secreted or membrane proteins, although T cells specific for these peptides are usually inactivated to prevent autoreactivity. Both the peptide and the MHC molecule are recognized by TCR, the peptide is responsible for the fine specificity of antigen recognition and MHC residues account for the MHC restriction of T cells. Typically presents intracellular peptide antigens of 8 to 13 amino acids that arise from cytosolic proteolysis via IFNG-induced immunoproteasome or via endopeptidase IDE/insulin-degrading enzyme. Can bind different peptides containing allele-specific binding motifs, which are mainly defined by anchor residues at position 2 and 9. Its function is as follows. Allele A*01:01: Presents a restricted peptide repertoire including viral epitopes derived from IAV NP/nucleoprotein (CTELKLSDY), IAV PB1/polymerase basic protein 1 (VSDGGPNLY), HAdV-11 capsid L3/hexon protein (LTDLGQNLLY), SARS-CoV-2 3a/ORF3a (FTSDYYQLY) as well as tumor peptide antigens including MAGE1 (EADPTGHSY), MAGEA3 (EVDPIGHLY) and WT1 (TSEKRPFMCAY), all having in common a canonical motif with a negatively charged Asp or Glu residue at position 3 and a Tyr anchor residue at the C-terminus. A number of HLA-A*01:01-restricted peptides carry a post-translational modification with oxidation and N-terminal acetylation being the most frequent. Fails to present highly immunogenic peptides from the EBV latent antigens. Allele A*02:01: A major allele in human populations, presents immunodominant viral epitopes derived from IAV M/matrix protein 1 (GILGFVFTL), HIV-1 env (TLTSCNTSV), HIV-1 gag-pol (ILKEPVHGV), HTLV-1 Tax (LLFGYPVYV), HBV C/core antigen (FLPSDFFPS), HCMV UL83/pp65 (NLVPMVATV) as well as tumor peptide antigens including MAGEA4 (GVYDGREHTV), WT1 (RMFPNAPYL) and CTAG1A/NY-ESO-1 (SLLMWITQC), all having in common hydrophobic amino acids at position 2 and at the C-terminal anchors. In terms of biological role, allele A*03:01: Presents viral epitopes derived from IAV NP (ILRGSVAHK), HIV-1 nef (QVPLRPMTYK), HIV-1 gag-pol (AIFQSSMTK), SARS-CoV-2 N/nucleoprotein (KTFPPTEPK) as well as tumor peptide antigens including PMEL (LIYRRRLMK), NODAL (HAYIQSLLK), TRP-2 (RMYNMVPFF), all having in common hydrophobic amino acids at position 2 and Lys or Arg anchor residues at the C-terminus. May also display spliced peptides resulting from the ligation of two separate proteasomal cleavage products that are not contiguous in the parental protein. Functionally, allele A*11:01: Presents several immunodominant epitopes derived from HIV-1 gag-pol and HHV-4 EBNA4, containing the peptide motif with Val, Ile, Thr, Leu, Tyr or Phe at position 2 and Lys anchor residue at the C-terminus. Important in the control of HIV-1, EBV and HBV infections. Presents an immunodominant epitope derived from SARS-CoV-2 N/nucleoprotein (KTFPPTEPK). Its function is as follows. Allele A*23:01: Interacts with natural killer (NK) cell receptor KIR3DL1 and may contribute to functional maturation of NK cells and self-nonself discrimination during innate immune response. Allele A*24:02: Presents viral epitopes derived from HIV-1 nef (RYPLTFGWCF), EBV lytic- and latent-cycle antigens BRLF1 (TYPVLEEMF), BMLF1 (DYNFVKQLF) and LMP2 (IYVLVMLVL), SARS-CoV nucleocapsid/N (QFKDNVILL), as well as tumor peptide antigens including PRAME (LYVDSLFFL), all sharing a common signature motif, namely an aromatic residue Tyr or Phe at position 2 and a nonhydrophobic anchor residue Phe, Leu or Iso at the C-terminus. Interacts with natural killer (NK) cell receptor KIR3DL1 and may contribute to functional maturation of NK cells and self-nonself discrimination during innate immune response. In terms of biological role, allele A*26:01: Presents several epitopes derived from HIV-1 gag-pol (EVIPMFSAL, ETKLGKAGY) and env (LVSDGGPNLY), carrying as anchor residues preferentially Glu at position 1, Val or Thr at position 2 and Tyr at the C-terminus. Functionally, allele A*29:02: Presents peptides having a common motif, namely a Glu residue at position 2 and Tyr or Leu anchor residues at the C-terminus. Its function is as follows. Allele A*32:01: Interacts with natural killer (NK) cell receptor KIR3DL1 and may contribute to functional maturation of NK cells and self-nonself discrimination during innate immune response. Allele A*68:01: Presents viral epitopes derived from IAV NP (KTGGPIYKR) and HIV-1 tat (ITKGLGISYGR), having a common signature motif namely, Val or Thr at position 2 and positively charged residues Arg or Lys at the C-terminal anchor. In terms of biological role, allele A*74:01: Presents immunodominant HIV-1 epitopes derived from gag-pol (GQMVHQAISPR, QIYPGIKVR) and rev (RQIHSISER), carrying an aliphatic residue at position 2 and Arg anchor residue at the C-terminus. May contribute to viral load control in chronic HIV-1 infection. The polypeptide is HLA class I histocompatibility antigen, A alpha chain (Homo sapiens (Human)).